Here is a 325-residue protein sequence, read N- to C-terminus: NADH-quinone oxidoreductase subunit H (325 aa).

8 consecutive transmembrane segments (helical) span residues 11–31 (ILISVLKAVVILLVVVTCGAF), 81–101 (AIFTLAPVIAFTSLLLSFAIV), 114–134 (IGILFFLMMAGLAVYAVLFAG), 154–174 (LSYEVFLGLSLMGVVAQAGSF), 186–206 (VWNVIPQFFGFVTFAIAGVAV), 237–257 (FFVGEYIGIVTVSALIVTLFF), 265–285 (LPPFIWFALKTAFFMVMFILI), and 304–324 (VCLPLTLLNLLATAAVILYNA).

It belongs to the complex I subunit 1 family. As to quaternary structure, NDH-1 is composed of 13 different subunits. Subunits NuoA, H, J, K, L, M, N constitute the membrane sector of the complex.

The protein resides in the cell inner membrane. The catalysed reaction is a quinone + NADH + 5 H(+)(in) = a quinol + NAD(+) + 4 H(+)(out). Functionally, NDH-1 shuttles electrons from NADH, via FMN and iron-sulfur (Fe-S) centers, to quinones in the respiratory chain. The immediate electron acceptor for the enzyme in this species is believed to be ubiquinone. Couples the redox reaction to proton translocation (for every two electrons transferred, four hydrogen ions are translocated across the cytoplasmic membrane), and thus conserves the redox energy in a proton gradient. This subunit may bind ubiquinone. The protein is NADH-quinone oxidoreductase subunit H of Yersinia enterocolitica serotype O:8 / biotype 1B (strain NCTC 13174 / 8081).